The chain runs to 552 residues: Chaperonin GroEL 1 (552 aa).

Residues 30 to 33 (TLGP), Lys-51, 87 to 91 (DGTTT), Gly-415, 479 to 481 (NAA), and Asp-495 each bind ATP.

The protein belongs to the chaperonin (HSP60) family. Forms a cylinder of 14 subunits composed of two heptameric rings stacked back-to-back. Interacts with the co-chaperonin GroES.

Its subcellular location is the cytoplasm. It catalyses the reaction ATP + H2O + a folded polypeptide = ADP + phosphate + an unfolded polypeptide.. Together with its co-chaperonin GroES, plays an essential role in assisting protein folding. The GroEL-GroES system forms a nano-cage that allows encapsulation of the non-native substrate proteins and provides a physical environment optimized to promote and accelerate protein folding. The polypeptide is Chaperonin GroEL 1 (Albidiferax ferrireducens (strain ATCC BAA-621 / DSM 15236 / T118) (Rhodoferax ferrireducens)).